The following is a 656-amino-acid chain: Acyl-CoA-binding domain-containing protein 6 (656 aa).

The 95-residue stretch at 8–102 folds into the ACB domain; that stretch reads YPDRFYAAAA…LEEEDPGWYS (95 aa). An acyl-CoA-binding positions include 44 to 48 and K70; that span reads YGLYQ. Positions 129–148 are disordered; sequence ASTNGTSVPEPKTISENGSS. Kelch repeat units lie at residues 194 to 241, 254 to 304, 305 to 354, 356 to 405, 406 to 454, and 461 to 507; these read KMYI…AQVS, KFFS…LVGT, TLVL…CHAD, YLLI…TVGE, NWYI…LVHS, and YLIS…EPEV. Positions 527-636 form a coiled coil; that stretch reads LKKDDANELL…EQAALEAKQR (110 aa). A disordered region spans residues 627–656; the sequence is EQAALEAKQRQSSSGMWGWLVGTPPDKSES.

Belongs to the ACBP family. As to expression, highly expressed in leaves. Expressed in roots and seeds.

Its subcellular location is the peroxisome. In terms of biological role, binds medium- and long-chain acyl-CoA esters with high affinity. Can interact in vitro with linoleoyl-CoA and linolenoyl-CoA. Binds phosphatidic acid (PA) and phosphatidylcholine (PC) in vitro. May play a role in the biosynthesis of phospholipids. May be involved in lipid degradation via peroxisomal beta-oxydation. The protein is Acyl-CoA-binding domain-containing protein 6 of Oryza sativa subsp. japonica (Rice).